The following is a 145-amino-acid chain: Small ribosomal subunit protein uS9 (145 aa).

Residues 1–13 (MATDQHSNKSNVS) show a composition bias toward polar residues. Residues 1–24 (MATDQHSNKSNVSAARKPLSPSPT) are disordered.

It belongs to the universal ribosomal protein uS9 family.

The protein resides in the cytoplasm. In Lupinus polyphyllus (Large-leaved lupine), this protein is Small ribosomal subunit protein uS9 (RPS16).